Reading from the N-terminus, the 128-residue chain is Fluoride-specific ion channel FluC (128 aa).

The next 4 helical transmembrane spans lie at 4 to 24, 39 to 59, 71 to 91, and 99 to 119; these read LLLA…RYLI, GTLI…EFSM, FLTT…YETI, and MTLG…FVVI. Residues Gly78 and Thr81 each contribute to the Na(+) site.

Belongs to the fluoride channel Fluc/FEX (TC 1.A.43) family.

The protein localises to the cell membrane. It catalyses the reaction fluoride(in) = fluoride(out). With respect to regulation, na(+) is not transported, but it plays an essential structural role and its presence is essential for fluoride channel function. Fluoride-specific ion channel. Important for reducing fluoride concentration in the cell, thus reducing its toxicity. This is Fluoride-specific ion channel FluC from Clostridium perfringens (strain 13 / Type A).